The chain runs to 431 residues: UDP-N-acetylglucosamine 1-carboxyvinyltransferase (431 aa).

22-23 (KN) serves as a coordination point for phosphoenolpyruvate. UDP-N-acetyl-alpha-D-glucosamine is bound at residue Arg-102. Residue Cys-126 is the Proton donor of the active site. Position 126 is a 2-(S-cysteinyl)pyruvic acid O-phosphothioketal (Cys-126). 2 residues coordinate UDP-N-acetyl-alpha-D-glucosamine: Asp-318 and Ile-340.

The protein belongs to the EPSP synthase family. MurA subfamily.

It is found in the cytoplasm. The catalysed reaction is phosphoenolpyruvate + UDP-N-acetyl-alpha-D-glucosamine = UDP-N-acetyl-3-O-(1-carboxyvinyl)-alpha-D-glucosamine + phosphate. It functions in the pathway cell wall biogenesis; peptidoglycan biosynthesis. Its function is as follows. Cell wall formation. Adds enolpyruvyl to UDP-N-acetylglucosamine. This chain is UDP-N-acetylglucosamine 1-carboxyvinyltransferase, found in Bartonella tribocorum (strain CIP 105476 / IBS 506).